Consider the following 407-residue polypeptide: Tryptophan synthase beta chain (407 aa).

K91 is subject to N6-(pyridoxal phosphate)lysine.

This sequence belongs to the TrpB family. As to quaternary structure, tetramer of two alpha and two beta chains. Pyridoxal 5'-phosphate is required as a cofactor.

It catalyses the reaction (1S,2R)-1-C-(indol-3-yl)glycerol 3-phosphate + L-serine = D-glyceraldehyde 3-phosphate + L-tryptophan + H2O. It functions in the pathway amino-acid biosynthesis; L-tryptophan biosynthesis; L-tryptophan from chorismate: step 5/5. In terms of biological role, the beta subunit is responsible for the synthesis of L-tryptophan from indole and L-serine. This Streptococcus pneumoniae (strain Hungary19A-6) protein is Tryptophan synthase beta chain.